The sequence spans 505 residues: T-cell activation inhibitor, mitochondrial (505 aa).

Positions 216–243 (LKNSLPLRKELDRLKNELSELLQLSDIR) form a coiled coil.

Expressed in peripheral blood leukocytes, mainly in T-lymphocytes.

The protein resides in the mitochondrion. Its function is as follows. May regulate T-cell apoptosis. This Rattus norvegicus (Rat) protein is T-cell activation inhibitor, mitochondrial (Tcaim).